The chain runs to 155 residues: Small ribosomal subunit protein uS7cz/uS7cy (155 aa).

The protein belongs to the universal ribosomal protein uS7 family. As to quaternary structure, part of the 30S ribosomal subunit.

Its subcellular location is the plastid. It localises to the chloroplast. In terms of biological role, one of the primary rRNA binding proteins, it binds directly to 16S rRNA where it nucleates assembly of the head domain of the 30S subunit. The polypeptide is Small ribosomal subunit protein uS7cz/uS7cy (rps7-A) (Ceratophyllum demersum (Rigid hornwort)).